A 488-amino-acid polypeptide reads, in one-letter code: Probable cytosol aminopeptidase (488 aa).

The Mn(2+) site is built by lysine 253 and aspartate 258. The active site involves lysine 265. Residues aspartate 276, aspartate 335, and glutamate 337 each contribute to the Mn(2+) site. Arginine 339 is an active-site residue.

This sequence belongs to the peptidase M17 family. Requires Mn(2+) as cofactor.

The protein localises to the cytoplasm. It catalyses the reaction Release of an N-terminal amino acid, Xaa-|-Yaa-, in which Xaa is preferably Leu, but may be other amino acids including Pro although not Arg or Lys, and Yaa may be Pro. Amino acid amides and methyl esters are also readily hydrolyzed, but rates on arylamides are exceedingly low.. The enzyme catalyses Release of an N-terminal amino acid, preferentially leucine, but not glutamic or aspartic acids.. Presumably involved in the processing and regular turnover of intracellular proteins. Catalyzes the removal of unsubstituted N-terminal amino acids from various peptides. This is Probable cytosol aminopeptidase from Dinoroseobacter shibae (strain DSM 16493 / NCIMB 14021 / DFL 12).